The sequence spans 318 residues: Olfactory receptor 5G26 (318 aa).

At 1–28 the chain is on the extracellular side; the sequence is MMHRNQTVVTEFFFTGLTSSFHLQIVLF. N-linked (GlcNAc...) asparagine glycosylation is present at N5. A helical membrane pass occupies residues 29 to 49; that stretch reads LTFLCVYLATLLGNLGMIILI. The Cytoplasmic portion of the chain corresponds to 50–56; it reads HLDTRLH. A helical transmembrane segment spans residues 57–77; it reads IPMYFFLSHLSFVDACSSSVI. The Extracellular portion of the chain corresponds to 78–93; that stretch reads SPKMLSDMFVDKKVIS. Residues 94-114 traverse the membrane as a helical segment; that stretch reads FLGCAIQLCLFSQFVVTECFL. C97 and C189 are joined by a disulfide. Residues 115 to 144 are Cytoplasmic-facing; it reads LASMAYDRYVAICKPLLYTLIMSQRVCVQL. Residues 145-165 traverse the membrane as a helical segment; that stretch reads VIGPYSIGFVSTMVHIISAFV. The Extracellular segment spans residues 166–198; the sequence is LPYCGPNLINHFFCDLLPVLSLACANTQMKKRL. A helical transmembrane segment spans residues 199–219; it reads LFIVAGILGVFSGIIILVSYV. Residues 220-239 are Cytoplasmic-facing; the sequence is YIAITILKISSADGRRKAFS. The helical transmembrane segment at 240 to 260 threads the bilayer; the sequence is TCSSHLTAVSILYGTLFFIYV. At 261-271 the chain is on the extracellular side; that stretch reads RPSSSFSLDIN. Residues 272–292 traverse the membrane as a helical segment; it reads KVVSLFYTTVIPMLNPFIYSL. Over 293–318 the chain is Cytoplasmic; sequence RNKEVKDALIRTFEKQFCYSFQDKIL.

This sequence belongs to the G-protein coupled receptor 1 family.

The protein localises to the cell membrane. In terms of biological role, potential odorant receptor. This is Olfactory receptor 5G26 from Mus musculus (Mouse).